Consider the following 395-residue polypeptide: Peptide-N(4)-(N-acetyl-beta-glucosaminyl)asparagine amidase (395 aa).

4 residues coordinate Zn(2+): C131, C134, C172, and C175. The Nucleophile role is filled by C198. Active-site residues include H232 and D249. A substrate-binding site is contributed by E252. A disordered region spans residues 363–395 (PELTKTTPSTDLPSGRQSGSTEWTKSRGENGES). The segment covering 366–385 (TKTTPSTDLPSGRQSGSTEW) has biased composition (polar residues). Residues 386–395 (TKSRGENGES) are compositionally biased toward basic and acidic residues.

It belongs to the transglutaminase-like superfamily. PNGase family. Zn(2+) is required as a cofactor.

The protein localises to the cytoplasm. It catalyses the reaction Hydrolysis of an N(4)-(acetyl-beta-D-glucosaminyl)asparagine residue in which the glucosamine residue may be further glycosylated, to yield a (substituted) N-acetyl-beta-D-glucosaminylamine and a peptide containing an aspartate residue.. Specifically deglycosylates the denatured form of N-linked glycoproteins in the cytoplasm and assists their proteasome-mediated degradation. Cleaves the beta-aspartyl-glucosamine (GlcNAc) of the glycan and the amide side chain of Asn, converting Asn to Asp. Prefers proteins containing high-mannose over those bearing complex type oligosaccharides. Can recognize misfolded proteins in the endoplasmic reticulum that are exported to the cytosol to be destroyed and deglycosylate them, while it has no activity toward native proteins. Deglycosylation is a prerequisite for subsequent proteasome-mediated degradation of some, but not all, misfolded glycoproteins. The chain is Peptide-N(4)-(N-acetyl-beta-glucosaminyl)asparagine amidase (PNG1) from Candida albicans (strain SC5314 / ATCC MYA-2876) (Yeast).